We begin with the raw amino-acid sequence, 422 residues long: Histidine--tRNA ligase (422 aa).

Belongs to the class-II aminoacyl-tRNA synthetase family. As to quaternary structure, homodimer.

The protein localises to the cytoplasm. The catalysed reaction is tRNA(His) + L-histidine + ATP = L-histidyl-tRNA(His) + AMP + diphosphate + H(+). The polypeptide is Histidine--tRNA ligase (Onion yellows phytoplasma (strain OY-M)).